The chain runs to 910 residues: MPLRLDIKRKLAQRSERVKSVDLHPTEPWILSSLYSGSVCIWNYQTQTMVKSFEVTELPVRSSKFIARKQWIVAGADDMFIRVYNYNTMDKVKVFEAHTDYIRCVAVHPTQPFVLSSSDDMLIKLWDWDKGWMCTQIFEGHSHYVMQVTFNPKDTNTFASASLDRTVKVWSLGSPDPNFTLDGHSKGVNCVDYFTGGDRPYLITGSDDQTAKVWDYQTKSCVQTLEGHAHNVSAVCFHPELPITLTGSEDGTVRLWHSTTYRLENTLNYGLERVWALGYMKGSRRVVIGYDEGTIMIKIGREVPVASMDSSGKIIWSKHNEIQTVNIKTIGADNEIADGERLPLAVKELGTCDLYPQSLRHNPNGRFVVVCGDGEYIIYTALAWRNRSFGSALEFVWSVDGEYAVRESTSRIKIYSKNFQERKSIRPPFSAERIFGGVLLAMCTNDFICFHDWAEGRMIRRIDVNVKNLYWADSGDLVTIASDTSFYILKYNRDVVSSHLDGGGSVGEEGVEDAFELLHEINERIRTGLWVGDCFIYNNSSSRLNYCVGGEVTTLFHLDRQMYLLGYLANQSRVYLIDKQFNVVGYTLLLTMIEYKTLVMRGDFDRANALLPSIPKEQHDSVARFLESQGMLEEALEIATDSNYRFDLAVQLGRLEVAKAIAIEAQSESKWRQLGELAMSTGKLDMAEECLLHAMDLSGLLLLYSSLGDAEGLTKLTSMAKEQGKNNVAFLCFFMLGKLEECLQLLIESNRIPEAALMSRSYLPSKVPEIVTLWKKDLQKVNPKAAESLADPDEYPNLFEDWQIALNVEANVAPKRGIYPPAEEYIIHAERPNETLVEAFKSMHIHLEEVLPDENGDDTHEAIEENGVEESQEDAVEVDVEADGSTDGAVLVNGNDTEEQWGTNNEESSA.

WD repeat units follow at residues 13–52 (QRSE…MVKS), 55–94 (VTEL…KVKV), 97–136 (AHTD…MCTQ), 140–180 (GHSH…PNFT), 183–224 (GHSK…CVQT), 227–266 (GHAH…LENT), 269–309 (YGLE…ASMD), 351–393 (TCDL…GSAL), and 461–501 (RIDV…SHLD). The segment at 882-910 (ADGSTDGAVLVNGNDTEEQWGTNNEESSA) is disordered. Residues 900–910 (QWGTNNEESSA) are compositionally biased toward polar residues.

The protein belongs to the WD repeat COPB2 family. As to quaternary structure, oligomeric complex that consists of at least the alpha, beta, beta', gamma, delta, epsilon and zeta subunits.

The protein resides in the cytoplasm. The protein localises to the golgi apparatus membrane. It localises to the cytoplasmic vesicle. Its subcellular location is the COPI-coated vesicle membrane. Functionally, the coatomer is a cytosolic protein complex that binds to dilysine motifs and reversibly associates with Golgi non-clathrin-coated vesicles, which further mediate biosynthetic protein transport from the ER, via the Golgi up to the trans Golgi network. Coatomer complex is required for budding from Golgi membranes, and is essential for the retrograde Golgi-to-ER transport of dilysine-tagged proteins. The polypeptide is Coatomer subunit beta'-2 (Oryza sativa subsp. japonica (Rice)).